Consider the following 1182-residue polypeptide: IQ motif and SEC7 domain-containing protein 3 (1182 aa).

Positions 20 to 56 (AIVQNQQSLIHTQRERIDELERRLDELSAENRSLWEH) form a coiled coil. Disordered regions lie at residues 62-157 (AQPP…ERPP) and 230-275 (AAGR…RQQP). Residues 63 to 78 (QPPPGLVPPSSAPLPA) show a composition bias toward pro residues. Composition is skewed to low complexity over residues 79–105 (APATAPAAAARAQEPLQDQGQRSAAAP) and 254–263 (GAGAASPRAG). Residue S259 is modified to Phosphoserine. The IQ domain occupies 315-344 (SRRAACTIQTAFRQYQLSKNFEKIRNSLLE). Disordered stretches follow at residues 444–479 (AGPPGLEAEGRAPESAGPGPGDDAAETPGLPPAHSG) and 521–616 (EPAA…ASAS). A compositionally biased stretch (basic and acidic residues) spans 533–548 (SGREAPEAPAVGREDA). Over residues 555–569 (AEAAASGAADGATAP) the composition is skewed to low complexity. Acidic residues predominate over residues 572 to 581 (EEEEEEEETA). Over residues 598–616 (SSSSTSTKSAKSGSEASAS) the composition is skewed to low complexity. Positions 644 to 837 (TLSTDTLRKR…VGIYERIQQK (194 aa)) constitute an SEC7 domain. The PH domain maps to 850-983 (TKVEKSIVGM…LKESIAEVTE (134 aa)). Positions 964 to 992 (SDEMQKFVEDLKESIAEVTELEQIRIEWE) form a coiled coil. 2 disordered regions span residues 1002–1090 (LSFK…PGTL) and 1121–1182 (YTSS…RSLV). A compositionally biased stretch (basic and acidic residues) spans 1022–1033 (AKREAALRERPA). Over residues 1043 to 1052 (NRLQTSQHNS) the composition is skewed to polar residues. Residues 1061-1087 (PVPPPDLQPSPPRQQTPPLPPPPPTPP) show a composition bias toward pro residues. A compositionally biased stretch (low complexity) spans 1121-1132 (YTSSSSDSCGST). Pro residues predominate over residues 1147–1157 (PPLPPPPPPYN).

Belongs to the BRAG family. In terms of assembly, interacts with DLG1 and DLG4. Interacts with GPHN. Expressed specifically in the adult brain, predominantly in the cerebral cortex and the olfactory bulb, but not in the fetal brain. Expressed only in mature neurons, but not in undifferentiated neural stem precursor cells (NSPCs), nor in glioma cells.

The protein localises to the cytoplasm. It localises to the postsynaptic density. Functionally, acts as a guanine nucleotide exchange factor (GEF) for ARF1. The chain is IQ motif and SEC7 domain-containing protein 3 (IQSEC3) from Homo sapiens (Human).